A 957-amino-acid chain; its full sequence is Glycine dehydrogenase (decarboxylating) (957 aa).

Lys708 carries the post-translational modification N6-(pyridoxal phosphate)lysine.

Belongs to the GcvP family. In terms of assembly, the glycine cleavage system is composed of four proteins: P, T, L and H. Requires pyridoxal 5'-phosphate as cofactor.

It catalyses the reaction N(6)-[(R)-lipoyl]-L-lysyl-[glycine-cleavage complex H protein] + glycine + H(+) = N(6)-[(R)-S(8)-aminomethyldihydrolipoyl]-L-lysyl-[glycine-cleavage complex H protein] + CO2. Functionally, the glycine cleavage system catalyzes the degradation of glycine. The P protein binds the alpha-amino group of glycine through its pyridoxal phosphate cofactor; CO(2) is released and the remaining methylamine moiety is then transferred to the lipoamide cofactor of the H protein. The chain is Glycine dehydrogenase (decarboxylating) from Escherichia coli O157:H7.